The following is a 370-amino-acid chain: Probable protein phosphatase 2C 67 (370 aa).

The region spanning 35-344 (TFGEFSMAMI…DDITVIVVYL (310 aa)) is the PPM-type phosphatase domain. Asp-77, Gly-78, Asp-276, and Asp-335 together coordinate Mn(2+).

This sequence belongs to the PP2C family. As to quaternary structure, interacts with SAUR19. Interacts with AHA2 at the plasma membrane. Mg(2+) is required as a cofactor. It depends on Mn(2+) as a cofactor.

The protein localises to the cell membrane. It catalyses the reaction O-phospho-L-seryl-[protein] + H2O = L-seryl-[protein] + phosphate. It carries out the reaction O-phospho-L-threonyl-[protein] + H2O = L-threonyl-[protein] + phosphate. Its function is as follows. Dephosphorylates and represses plasma membrane H(+)-ATPases (PM H(+)-ATPases, e.g. AHA1 and AHA2), thus influencing negatively plant growth and fitness. Promotes the apical hook maintenance of etiolated seedlings. This is Probable protein phosphatase 2C 67 from Arabidopsis thaliana (Mouse-ear cress).